A 341-amino-acid chain; its full sequence is UDP-glucose 4-epimerase (341 aa).

Belongs to the polysaccharide synthase family.

The enzyme catalyses UDP-alpha-D-glucose = UDP-alpha-D-galactose. In terms of biological role, epimerizes UDP-galactose to UDP-glucose. The polypeptide is UDP-glucose 4-epimerase (capD) (Rickettsia conorii (strain ATCC VR-613 / Malish 7)).